A 266-amino-acid chain; its full sequence is Mediator of RNA polymerase II transcription subunit 18 (266 aa).

The protein belongs to the Mediator complex subunit 18 family. As to quaternary structure, component of the Mediator complex.

The protein resides in the nucleus. Its function is as follows. Component of the Mediator complex, a coactivator involved in the regulated transcription of nearly all RNA polymerase II-dependent genes. Mediator functions as a bridge to convey information from gene-specific regulatory proteins to the basal RNA polymerase II transcription machinery. Mediator is recruited to promoters by direct interactions with regulatory proteins and serves as a scaffold for the assembly of a functional preinitiation complex with RNA polymerase II and the general transcription factors. This is Mediator of RNA polymerase II transcription subunit 18 (SRB5) from Candida glabrata (strain ATCC 2001 / BCRC 20586 / JCM 3761 / NBRC 0622 / NRRL Y-65 / CBS 138) (Yeast).